The sequence spans 353 residues: (S)-8-amino-7-oxononanoate synthase BioU (353 aa).

10–14 contacts NAD(+); it reads GTGGI. The Nucleophile role is filled by Lys147. Allysine is present on Lys147. 214 to 215 contributes to the NAD(+) binding site; that stretch reads GT. Glu218 acts as the Proton acceptor in catalysis. His222 functions as the Proton donor and proton acceptor in the catalytic mechanism.

It belongs to the BioU family. Monomer.

The enzyme catalyses (8S)-8-amino-7-oxononanoate + L-lysyl-[protein] + CO2 = (S)-2-amino-6-oxohexanoyl-[protein] + (7R,8S)-8-amino-7-(carboxyamino)nonanoate + 2 H(+). It catalyses the reaction (8S)-8-amino-7-oxononanoate + L-lysyl-[protein] + NADPH + H(+) = N(6)-[(2S,3R)-2-amino-8-carboxyoctan-3-yl]-L-lysyl-[protein] + NADP(+) + H2O. It carries out the reaction N(6)-[(2S,3R)-2-amino-8-carboxyoctan-3-yl]-L-lysyl-[protein] + CO2 + NADP(+) + H2O = (S)-2-amino-6-oxohexanoyl-[protein] + (7R,8S)-8-amino-7-(carboxyamino)nonanoate + NADPH + 3 H(+). The catalysed reaction is (8S)-8-amino-7-oxononanoate + L-lysyl-[protein] + NADH + H(+) = N(6)-[(2S,3R)-2-amino-8-carboxyoctan-3-yl]-L-lysyl-[protein] + NAD(+) + H2O. The enzyme catalyses N(6)-[(2S,3R)-2-amino-8-carboxyoctan-3-yl]-L-lysyl-[protein] + CO2 + NAD(+) + H2O = (S)-2-amino-6-oxohexanoyl-[protein] + (7R,8S)-8-amino-7-(carboxyamino)nonanoate + NADH + 3 H(+). The protein operates within cofactor biosynthesis; biotin biosynthesis. In terms of biological role, a 'suicide' enzyme that participates in biotin synthesis. Catalyzes the formation of (S)-8-amino-7-oxononanoate (DAN-carbamic acid) from (7R,8S)-8-amino-7-(carboxyamino)nonanoate (DAN), a function equivalent to the cannonical BioA reaction and the first half-reaction of BioD. The cellular requirement for biotin is thought be low enough that this single turnover enzyme supplies a sufficient amount of the cofactor. Overall it catalyzes three reactions: formation of a covalent linkage with 8-amino-7-oxononanoate to yield a BioU-DAN conjugate at the epsilon-amino group of Lys124 of BioU using NAD(P)H, carboxylation of the conjugate to form BioU-DAN-carbamic acid, and release of DAN-carbamic acid using NAD(P)+. Complements a bioA deletion in E.coli. The protein is (S)-8-amino-7-oxononanoate synthase BioU of Haloferax mediterranei (strain ATCC 33500 / DSM 1411 / JCM 8866 / NBRC 14739 / NCIMB 2177 / R-4) (Halobacterium mediterranei).